The primary structure comprises 401 residues: Imidazolonepropionase (401 aa).

Fe(3+)-binding residues include H66 and H68. Residues H66 and H68 each coordinate Zn(2+). Residues R75, Y138, and H171 each coordinate 4-imidazolone-5-propanoate. Y138 lines the N-formimidoyl-L-glutamate pocket. Residue H236 coordinates Fe(3+). Residue H236 participates in Zn(2+) binding. 4-imidazolone-5-propanoate is bound at residue Q239. Residue D311 participates in Fe(3+) binding. Residue D311 participates in Zn(2+) binding. N-formimidoyl-L-glutamate-binding residues include N313 and G315. T316 contributes to the 4-imidazolone-5-propanoate binding site.

Belongs to the metallo-dependent hydrolases superfamily. HutI family. Requires Zn(2+) as cofactor. The cofactor is Fe(3+).

The protein resides in the cytoplasm. The catalysed reaction is 4-imidazolone-5-propanoate + H2O = N-formimidoyl-L-glutamate. It participates in amino-acid degradation; L-histidine degradation into L-glutamate; N-formimidoyl-L-glutamate from L-histidine: step 3/3. Functionally, catalyzes the hydrolytic cleavage of the carbon-nitrogen bond in imidazolone-5-propanoate to yield N-formimidoyl-L-glutamate. It is the third step in the universal histidine degradation pathway. The chain is Imidazolonepropionase from Acinetobacter baumannii (strain AB0057).